Reading from the N-terminus, the 435-residue chain is ATP-dependent Clp protease ATP-binding subunit ClpX 3 (435 aa).

In terms of domain architecture, ClpX-type ZB spans 1–53 (MSSDPPAKTQHCSFCGIEQGRDTPLIAGIEGQICEACVRLAEQVVANWGRKRS). 4 residues coordinate Zn(2+): C12, C15, C34, and C37. Position 125 to 132 (125 to 132 (PTGTGKTL)) interacts with ATP.

It belongs to the ClpX chaperone family. As to quaternary structure, component of the ClpX-ClpP complex. Forms a hexameric ring that, in the presence of ATP, binds to fourteen ClpP subunits assembled into a disk-like structure with a central cavity, resembling the structure of eukaryotic proteasomes.

Its function is as follows. ATP-dependent specificity component of the Clp protease. It directs the protease to specific substrates. Can perform chaperone functions in the absence of ClpP. This is ATP-dependent Clp protease ATP-binding subunit ClpX 3 from Methylococcus capsulatus (strain ATCC 33009 / NCIMB 11132 / Bath).